The following is a 277-amino-acid chain: uncharacterized protein (277 aa).

2 disordered regions span residues 1 to 103 and 254 to 277; these read PPLR…LEDP and PSPSSAPHATSRRPHTQLQVSPPR. Residues 48 to 65 are compositionally biased toward basic and acidic residues; it reads RRNDTGKDRGTHRQRAET. Residues 66 to 77 are compositionally biased toward polar residues; that stretch reads PSRSPVPTTNTV. Residues 82 to 91 are compositionally biased toward basic residues; that stretch reads PAVRRQRRTQ.

This is an uncharacterized protein from Homo sapiens (Human).